The sequence spans 122 residues: Seminal vesicle secretory protein 5 (122 aa).

The signal sequence occupies residues 1–21 (MSPTSFFLLTLLLVLVTEARG). Residues 23–122 (RERFSQSAED…KTRVKSRILK (100 aa)) form a disordered region. A compositionally biased stretch (polar residues) spans 27–37 (SQSAEDPSSSH).

The protein belongs to the SVP2/SVP5/SVP6 family. In terms of tissue distribution, testis.

The protein localises to the secreted. The protein resides in the extracellular space. The chain is Seminal vesicle secretory protein 5 (Svs5) from Mus musculus (Mouse).